The primary structure comprises 277 residues: Undecaprenyl-diphosphatase (277 aa).

The next 6 helical transmembrane spans lie at 47-67 (FNII…RGKI), 85-105 (ANLL…ADLI), 108-128 (WLFN…VMLW), 187-207 (FSFF…GYVY), 218-238 (VFAV…RALL), and 249-269 (FAWY…FHLI).

It belongs to the UppP family.

It localises to the cell inner membrane. The catalysed reaction is di-trans,octa-cis-undecaprenyl diphosphate + H2O = di-trans,octa-cis-undecaprenyl phosphate + phosphate + H(+). Catalyzes the dephosphorylation of undecaprenyl diphosphate (UPP). Confers resistance to bacitracin. The sequence is that of Undecaprenyl-diphosphatase from Pseudomonas aeruginosa (strain ATCC 15692 / DSM 22644 / CIP 104116 / JCM 14847 / LMG 12228 / 1C / PRS 101 / PAO1).